A 99-amino-acid polypeptide reads, in one-letter code: Ferredoxin, heterocyst (99 aa).

Positions 4–96 (YQVRLINKKQ…NCTIKTHQEP (93 aa)) constitute a 2Fe-2S ferredoxin-type domain. Residues Cys-42, Cys-47, Cys-50, and Cys-80 each coordinate [2Fe-2S] cluster.

It belongs to the 2Fe2S plant-type ferredoxin family. [2Fe-2S] cluster is required as a cofactor.

Its function is as follows. Ferredoxins are iron-sulfur proteins that transfer electrons in a wide variety of metabolic reactions. Donates electrons to the nitrogenase. The protein is Ferredoxin, heterocyst (fdxH) of Nostoc sp. (strain PCC 7120 / SAG 25.82 / UTEX 2576).